The primary structure comprises 259 residues: Insulin-induced gene 1 protein (259 aa).

Topologically, residues 1-66 (MPRLHDHVWN…ARPGSWHHDL (66 aa)) are cytoplasmic. The segment at 36–55 (PGVPEPEHAPRGQRAGTTGC) is disordered. The helical transmembrane segment at 67–89 (VQRSLVLFSFGVVLALVLNLLQI) threads the bilayer. The Extracellular portion of the chain corresponds to 90–108 (QRNVTLFPDEVIATIFSSA). Residues 109 to 126 (WWVPPCCGTAAAVVGLLY) form a helical membrane-spanning segment. Over 127–141 (PCIDSHLGEPHKFKR) the chain is Cytoplasmic. Glycyl lysine isopeptide (Lys-Gly) (interchain with G-Cter in ubiquitin) cross-links involve residues lysine 138 and lysine 140. A helical transmembrane segment spans residues 142 to 164 (EWASVMRCIAVFVGINHASAKLD). The Extracellular segment spans residues 165–167 (FAN). Residues 168–186 (NVQLSLTLAALSLGLWWTF) form a helical membrane-spanning segment. At 187 to 191 (DRSRS) the chain is on the cytoplasmic side. A Phosphoserine modification is found at serine 189. Residues 192–213 (GLGLGITIAFLATLITQFLVYN) form a helical membrane-spanning segment. Topologically, residues 214 to 227 (GVYQYTSPDFLYIR) are extracellular. The helical transmembrane segment at 228 to 245 (SWLPCIFFSGGVTVGNIG) threads the bilayer. The Cytoplasmic portion of the chain corresponds to 246 to 259 (RQLAMGVPEKPHSD). The KxHxx motif lies at 253 to 259 (PEKPHSD).

This sequence belongs to the INSIG family. As to quaternary structure, interacts with SCAP; interaction is direct and only takes place in the presence of sterols; it prevents interaction between SCAP and the coat protein complex II (COPII). Associates with the SCAP-SREBP complex (composed of SCAP and SREBF1/SREBP1 or SREBF2/SREBP2); association is mediated via its interaction with SCAP and only takes place in the presence of sterols. Interaction with SCAP is mutually exclusive with PAQR3. Interacts with HMGCR (via its SSD); the interaction, accelerated by sterols, leads to the recruitment of HMGCR to AMFR/gp78 for its ubiquitination by the sterol-mediated ERAD pathway. Interacts with AMFR/gp78 (via its membrane domain); the interaction recruits HMCR at the ER membrane for its ubiquitination and degradation by the sterol-mediated ERAD pathway. Interacts with SOAT2/ACAT2; leading to promote recruitment of AMFR/gp78 and subsequent ubiquitination of SOAT2/ACAT2. Interacts with RNF139. Interacts with RNF145. In terms of processing, phosphorylation at Ser-189 by PCK1 reduces binding to oxysterol, disrupting the interaction between INSIG1 and SCAP, thereby promoting nuclear translocation of SREBP proteins (SREBF1/SREBP1 or SREBF2/SREBP2) and subsequent transcription of downstream lipogenesis-related genes. Post-translationally, ubiquitinated by AMFR/gp78 in response to sterol deprivation, leading to its degradation: when the SCAP-SREBP complex becomes dissociated from INSIG1, INSIG1 is then ubiquitinated and degraded in proteasomes. Although ubiquitination is required for rapid INSIG1 degradation, it is not required for release of the SCAP-SREBP complex. Ubiquitinated by RNF139.

It localises to the endoplasmic reticulum membrane. In terms of biological role, oxysterol-binding protein that mediates feedback control of cholesterol synthesis by controlling both endoplasmic reticulum to Golgi transport of SCAP and degradation of HMGCR. Acts as a negative regulator of cholesterol biosynthesis by mediating the retention of the SCAP-SREBP complex in the endoplasmic reticulum, thereby blocking the processing of sterol regulatory element-binding proteins (SREBPs) SREBF1/SREBP1 and SREBF2/SREBP2. Binds oxysterol, including 25-hydroxycholesterol, regulating interaction with SCAP and retention of the SCAP-SREBP complex in the endoplasmic reticulum. In presence of oxysterol, interacts with SCAP, retaining the SCAP-SREBP complex in the endoplasmic reticulum, thereby preventing SCAP from escorting SREBF1/SREBP1 and SREBF2/SREBP2 to the Golgi. Sterol deprivation or phosphorylation by PCK1 reduce oxysterol-binding, disrupting the interaction between INSIG1 and SCAP, thereby promoting Golgi transport of the SCAP-SREBP complex, followed by processing and nuclear translocation of SREBF1/SREBP1 and SREBF2/SREBP2. Also regulates cholesterol synthesis by regulating degradation of HMGCR: initiates the sterol-mediated ubiquitin-mediated endoplasmic reticulum-associated degradation (ERAD) of HMGCR via recruitment of the reductase to the ubiquitin ligases AMFR/gp78 and/or RNF139. Also regulates degradation of SOAT2/ACAT2 when the lipid levels are low: initiates the ubiquitin-mediated degradation of SOAT2/ACAT2 via recruitment of the ubiquitin ligases AMFR/gp78. The protein is Insulin-induced gene 1 protein of Mus musculus (Mouse).